We begin with the raw amino-acid sequence, 200 residues long: Ependymin-related protein 1 (200 aa).

The signal sequence occupies residues 1–17; sequence MILQAALFLAGLTVVSG. Residues asparagine 36, asparagine 124, and asparagine 136 are each glycosylated (N-linked (GlcNAc...) asparagine).

The protein belongs to the ependymin family. In terms of tissue distribution, component of the acid-soluble and acid-insoluble organic matrix of prismatic shell layers (at protein level). Expressed discontinuously in the anterior zone of the outer fold of the mantle where its expression correlates with shell pigmentation.

Its subcellular location is the secreted. In Haliotis asinina (Donkey's ear abalone), this protein is Ependymin-related protein 1.